Consider the following 962-residue polypeptide: Vacuolar membrane protease (962 aa).

Topologically, residues 1–15 are cytoplasmic; the sequence is MVSSRRGFNPIAFTP. A helical membrane pass occupies residues 16-36; that stretch reads WPVTILSSLVYLALIIPIIVV. Topologically, residues 37-390 are vacuolar; it reads HHLVPPAPKE…FQLNTLFGHS (354 aa). 2 N-linked (GlcNAc...) asparagine glycosylation sites follow: Asn110 and Asn113. Zn(2+)-binding residues include His169 and Asp181. Glu215 (proton acceptor) is an active-site residue. Glu216, Glu241, and His314 together coordinate Zn(2+). A helical membrane pass occupies residues 391–411; that stretch reads VALLVVAPLLLIITSVALFAV. The Cytoplasmic portion of the chain corresponds to 412–440; sequence DKMYMFSMYTYISESGGQVSLYGLRGMFR. Residues 441–461 traverse the membrane as a helical segment; the sequence is FPLILGISTALTIALAFLIMK. The Vacuolar segment spans residues 462 to 472; sequence VNPFIIYSSPY. A helical transmembrane segment spans residues 473-493; it reads AVWSMMLSTCMFFAWFISCVA. At 494 to 503 the chain is on the cytoplasmic side; it reads DFARPSALHR. Residues 504-524 traverse the membrane as a helical segment; that stretch reads AYSFSWMFGIMWVFLVIATVY. At 525–534 the chain is on the vacuolar side; it reads QKQHGIASSY. The chain crosses the membrane as a helical span at residues 535–555; it reads FIVFYFAGVAVATWISYLELF. Over 556–667 the chain is Cytoplasmic; sequence GLPKTQDYAR…WSIYLMSSAW (112 aa). Positions 568 to 617 are disordered; sequence GRLSDRTPSSDSHFLAPSADELPSSSSAAGRDFNPEDVEDEEPTESTSLL. The segment covering 602–611 has biased composition (acidic residues); the sequence is PEDVEDEEPT. The helical transmembrane segment at 668–688 threads the bilayer; it reads ILQFLLVAPIVIILLGQLGLF. Over 689 to 704 the chain is Vacuolar; that stretch reads LTSATYQIGADGGSQL. The chain crosses the membrane as a helical span at residues 705–725; it reads VIYIGIAVLSVLILLPLFPFI. Topologically, residues 726-731 are cytoplasmic; that stretch reads HRFTYH. Residues 732–752 form a helical membrane-spanning segment; that stretch reads IPTFLLFILIGTLVYNLTAFP. The Vacuolar segment spans residues 753 to 962; the sequence is FSHSNRLKLA…LVEGSYSFKL (210 aa). An N-linked (GlcNAc...) asparagine glycan is attached at Asn834.

It belongs to the peptidase M28 family. The cofactor is Zn(2+).

It is found in the vacuole membrane. Its function is as follows. May be involved in vacuolar sorting and osmoregulation. The sequence is that of Vacuolar membrane protease from Arthroderma benhamiae (strain ATCC MYA-4681 / CBS 112371) (Trichophyton mentagrophytes).